The primary structure comprises 98 residues: VQ motif-containing protein 1 (98 aa).

The VQ signature appears at 27–36; sequence FKTIVQELTG.

As to quaternary structure, interacts with WRKY33.

Its subcellular location is the nucleus. Functionally, may modulate WRKY transcription factor activities. The sequence is that of VQ motif-containing protein 1 from Arabidopsis thaliana (Mouse-ear cress).